The following is a 174-amino-acid chain: Ubiquitin-fold modifier-conjugating enzyme 1 (174 aa).

Residue C119 is the Glycyl thioester intermediate of the active site.

This sequence belongs to the ubiquitin-conjugating enzyme family. UFC1 subfamily.

Its function is as follows. E2-like enzyme which forms an intermediate with UFM1 via a thioester linkage. This chain is Ubiquitin-fold modifier-conjugating enzyme 1, found in Arabidopsis thaliana (Mouse-ear cress).